Reading from the N-terminus, the 357-residue chain is Sorbitol dehydrogenase (357 aa).

Position 2 is an N-acetylalanine (Ala-2). Residue Cys-45 participates in Zn(2+) binding. Tyr-51 contacts substrate. Positions 70 and 71 each coordinate Zn(2+). Glu-156 lines the substrate pocket. Positions 184, 204, and 209 each coordinate NAD(+). Residues Ser-211 and Ser-225 each carry the phosphoserine modification. NAD(+) is bound by residues Val-273–Leu-275 and Val-297–Arg-299. Substrate-binding residues include Arg-299 and Tyr-300.

It belongs to the zinc-containing alcohol dehydrogenase family. As to quaternary structure, homotetramer. It depends on Zn(2+) as a cofactor. As to expression, expressed in liver. Expressed in kidney and epithelial cells of both benign and malignant prostate tissue. Expressed in epididymis (at protein level).

It is found in the mitochondrion membrane. The protein localises to the cell projection. Its subcellular location is the cilium. The protein resides in the flagellum. It carries out the reaction keto-D-fructose + NADH + H(+) = D-sorbitol + NAD(+). It catalyses the reaction L-threitol + NAD(+) = L-erythrulose + NADH + H(+). The catalysed reaction is xylitol + NAD(+) = D-xylulose + NADH + H(+). The enzyme catalyses ribitol + NAD(+) = D-ribulose + NADH + H(+). It carries out the reaction (R,R)-butane-2,3-diol + NAD(+) = (R)-acetoin + NADH + H(+). It catalyses the reaction L-iditol + NAD(+) = keto-L-sorbose + NADH + H(+). With respect to regulation, inhibited by CP-166,572, an inhibitor that is competitive with fructose. Also competitively inhibited by phenanthroline and 4-methylpyrazole in vitro. Its function is as follows. Polyol dehydrogenase that catalyzes the reversible NAD(+)-dependent oxidation of various sugar alcohols. Is mostly active with D-sorbitol (D-glucitol), L-threitol, xylitol and ribitol as substrates, leading to the C2-oxidized products D-fructose, L-erythrulose, D-xylulose, and D-ribulose, respectively. Is a key enzyme in the polyol pathway that interconverts glucose and fructose via sorbitol, which constitutes an important alternate route for glucose metabolism. The polyol pathway is believed to be involved in the etiology of diabetic complications, such as diabetic neuropathy and retinopathy, induced by hyperglycemia. May play a role in sperm motility by using sorbitol as an alternative energy source for sperm motility. May have a more general function in the metabolism of secondary alcohols since it also catalyzes the stereospecific oxidation of (2R,3R)-2,3-butanediol. To a lesser extent, can also oxidize L-arabinitol, galactitol and D-mannitol and glycerol in vitro. Oxidizes neither ethanol nor other primary alcohols. Cannot use NADP(+) as the electron acceptor. The sequence is that of Sorbitol dehydrogenase (SORD) from Homo sapiens (Human).